Here is a 784-residue protein sequence, read N- to C-terminus: LPS-assembly protein LptD (784 aa).

A signal peptide spans 1–24 (MKKRIPTLLATMIATALYSQQGLA). 2 cysteine pairs are disulfide-bonded: C31-C724 and C173-C725.

Belongs to the LptD family. As to quaternary structure, component of the lipopolysaccharide transport and assembly complex. Interacts with LptE and LptA. Post-translationally, contains two intramolecular disulfide bonds.

The protein resides in the cell outer membrane. Its function is as follows. Together with LptE, is involved in the assembly of lipopolysaccharide (LPS) at the surface of the outer membrane. In Shigella flexneri serotype 5b (strain 8401), this protein is LPS-assembly protein LptD.